A 456-amino-acid polypeptide reads, in one-letter code: Imidazolonepropionase (456 aa).

2 residues coordinate Fe(3+): H104 and H106. Zn(2+) contacts are provided by H104 and H106. The 4-imidazolone-5-propanoate site is built by R113, Y176, and H209. An N-formimidoyl-L-glutamate-binding site is contributed by Y176. A Fe(3+)-binding site is contributed by H274. H274 provides a ligand contact to Zn(2+). Q277 contacts 4-imidazolone-5-propanoate. Fe(3+) is bound at residue D349. D349 lines the Zn(2+) pocket. 2 residues coordinate N-formimidoyl-L-glutamate: N351 and G353. S354 lines the 4-imidazolone-5-propanoate pocket.

The protein belongs to the metallo-dependent hydrolases superfamily. HutI family. Zn(2+) serves as cofactor. Requires Fe(3+) as cofactor.

It localises to the cytoplasm. It catalyses the reaction 4-imidazolone-5-propanoate + H2O = N-formimidoyl-L-glutamate. The protein operates within amino-acid degradation; L-histidine degradation into L-glutamate; N-formimidoyl-L-glutamate from L-histidine: step 3/3. Its function is as follows. Catalyzes the hydrolytic cleavage of the carbon-nitrogen bond in imidazolone-5-propanoate to yield N-formimidoyl-L-glutamate. It is the third step in the universal histidine degradation pathway. This Verminephrobacter eiseniae (strain EF01-2) protein is Imidazolonepropionase.